A 41-amino-acid chain; its full sequence is Divisome-associated membrane protein Blr (41 aa).

The Cytoplasmic segment spans residues 1 to 3 (MNR). The chain crosses the membrane as a helical span at residues 4 to 24 (LIELTGWIVLVVSVILLGVAS). The Periplasmic segment spans residues 25 to 41 (HIDNYQPPEQSASVQHK).

Interacts with FtsL and several other divisomal proteins, including FtsI, FtsK, FtsN, FtsQ, FtsW and YmgF. The N-terminus is blocked.

The protein resides in the cell inner membrane. Its function is as follows. Component of the cell division machinery, which is probably involved in the stabilization of the divisome under certain stress conditions. The protein is Divisome-associated membrane protein Blr (blr) of Escherichia coli (strain K12).